A 71-amino-acid polypeptide reads, in one-letter code: Small ribosomal subunit protein bS18c (71 aa).

Belongs to the bacterial ribosomal protein bS18 family. In terms of assembly, part of the 30S ribosomal subunit.

It is found in the plastid. Its subcellular location is the cyanelle. This Cyanophora paradoxa protein is Small ribosomal subunit protein bS18c (rps18).